Consider the following 240-residue polypeptide: Urease accessory protein UreF (240 aa).

This sequence belongs to the UreF family. In terms of assembly, ureD, UreF and UreG form a complex that acts as a GTP-hydrolysis-dependent molecular chaperone, activating the urease apoprotein by helping to assemble the nickel containing metallocenter of UreC. The UreE protein probably delivers the nickel.

It localises to the cytoplasm. Functionally, required for maturation of urease via the functional incorporation of the urease nickel metallocenter. The chain is Urease accessory protein UreF from Bradyrhizobium sp. (strain BTAi1 / ATCC BAA-1182).